A 315-amino-acid polypeptide reads, in one-letter code: DNA-directed RNA polymerase subunit alpha (315 aa).

The segment at 1–228 (MLEIEKPKIE…EHFKLFMTLT (228 aa)) is alpha N-terminal domain (alpha-NTD). The interval 245-315 (KEKVLEMTIE…LGLGLRKSED (71 aa)) is alpha C-terminal domain (alpha-CTD).

The protein belongs to the RNA polymerase alpha chain family. As to quaternary structure, homodimer. The RNAP catalytic core consists of 2 alpha, 1 beta, 1 beta' and 1 omega subunit. When a sigma factor is associated with the core the holoenzyme is formed, which can initiate transcription.

The enzyme catalyses RNA(n) + a ribonucleoside 5'-triphosphate = RNA(n+1) + diphosphate. DNA-dependent RNA polymerase catalyzes the transcription of DNA into RNA using the four ribonucleoside triphosphates as substrates. The protein is DNA-directed RNA polymerase subunit alpha of Clostridium botulinum (strain Langeland / NCTC 10281 / Type F).